We begin with the raw amino-acid sequence, 137 residues long: Ribosomal RNA small subunit methyltransferase G (137 aa).

Residues glycine 75, phenylalanine 80, and 126–127 (AE) contribute to the S-adenosyl-L-methionine site.

Belongs to the methyltransferase superfamily. RNA methyltransferase RsmG family.

The protein localises to the cytoplasm. Specifically methylates the N7 position of a guanine in 16S rRNA. This is Ribosomal RNA small subunit methyltransferase G from Mycoplasma mycoides subsp. mycoides SC (strain CCUG 32753 / NCTC 10114 / PG1).